We begin with the raw amino-acid sequence, 268 residues long: MRDRLFFLLSKYGIRPRDSIGQHFLIIEDVIEKAIETANVNENDVILEVGPGLGFLTDELAKRAKKVYTIEIDQKIIEILKKEYSWNNVKIIQGDAVRVEWPKFNKVVSNIPYKISSPFTFKLLKTDFERAVVMYQLEFALRMVAKPGSRNYSRLSLMAQALGNVEIVMKIGKGAFYPRPKVDSALVLIEPRKDKIVLNENLVKALFQHRRKTVPRALKDSIHMLGVSKDEIRGIINNVPHSNKRVFQLYPEEVKDIEEYLKKHGIIS.

6 residues coordinate S-adenosyl-L-methionine: H23, L25, G50, E71, D95, and N110.

The protein belongs to the class I-like SAM-binding methyltransferase superfamily. rRNA adenine N(6)-methyltransferase family. RsmA subfamily.

The protein localises to the cytoplasm. In terms of biological role, specifically dimethylates two adjacent adenosines in the loop of a conserved hairpin near the 3'-end of 16S rRNA in the 30S particle. May play a critical role in biogenesis of 30S subunits. The polypeptide is Probable ribosomal RNA small subunit methyltransferase A (Pyrococcus horikoshii (strain ATCC 700860 / DSM 12428 / JCM 9974 / NBRC 100139 / OT-3)).